A 93-amino-acid chain; its full sequence is Red pigment-concentrating hormone (93 aa).

The first 21 residues, 1–21 (MVRAVVATLLVVLVVASCVSA), serve as a signal peptide directing secretion. Gln-22 bears the Pyrrolidone carboxylic acid mark. Trp-29 carries the post-translational modification Tryptophan amide. Residues 33–93 (AAAGGEGTGM…VQCQDEEYLG (61 aa)) constitute a propeptide that is removed on maturation. Residues 34–56 (AAGGEGTGMHPPAGAVVPPPSSL) form a disordered region.

This sequence belongs to the AKH/HRTH/RPCH family. In terms of tissue distribution, strongly expressed in the eyestalk and weakly in brain. Not expressed in other tissues tested.

It localises to the secreted. This hormone adapts the animal to light backgrounds by stimulating concentration of the pigment of its red body-chromatophores. This chain is Red pigment-concentrating hormone, found in Penaeus monodon (Giant tiger prawn).